Here is a 230-residue protein sequence, read N- to C-terminus: ATP synthase subunit a (230 aa).

Transmembrane regions (helical) follow at residues 17-37 (LPITQSVLTTWFIMISLFIMA), 78-98 (IFPFVATLWIFILVSNLIGVI), 107-127 (DLSVTASLAMMTFLSVHWFGI), 165-187 (LFGNIMSLQLTALIVLMIAGFLV), and 198-218 (EAIIQAYIFGMLALIYIAGGI).

Belongs to the ATPase A chain family. In terms of assembly, F-type ATPases have 2 components, CF(1) - the catalytic core - and CF(0) - the membrane proton channel. CF(1) has five subunits: alpha(3), beta(3), gamma(1), delta(1), epsilon(1). CF(0) has three main subunits: a(1), b(2) and c(9-12). The alpha and beta chains form an alternating ring which encloses part of the gamma chain. CF(1) is attached to CF(0) by a central stalk formed by the gamma and epsilon chains, while a peripheral stalk is formed by the delta and b chains.

Its subcellular location is the cell inner membrane. Functionally, key component of the proton channel; it plays a direct role in the translocation of protons across the membrane. This Legionella pneumophila (strain Corby) protein is ATP synthase subunit a.